Consider the following 592-residue polypeptide: Aspartate--tRNA ligase (592 aa).

An L-aspartate-binding site is contributed by glutamate 171. The segment at 195–198 (QLFK) is aspartate. Arginine 217 contacts L-aspartate. ATP contacts are provided by residues 217-219 (RDE) and glutamine 226. L-aspartate is bound at residue histidine 448. Glutamate 482 contributes to the ATP binding site. Arginine 489 provides a ligand contact to L-aspartate. 534–537 (GLDR) contacts ATP.

Belongs to the class-II aminoacyl-tRNA synthetase family. Type 1 subfamily. As to quaternary structure, homodimer.

The protein localises to the cytoplasm. The catalysed reaction is tRNA(Asp) + L-aspartate + ATP = L-aspartyl-tRNA(Asp) + AMP + diphosphate. Functionally, catalyzes the attachment of L-aspartate to tRNA(Asp) in a two-step reaction: L-aspartate is first activated by ATP to form Asp-AMP and then transferred to the acceptor end of tRNA(Asp). The sequence is that of Aspartate--tRNA ligase from Vibrio vulnificus (strain YJ016).